The primary structure comprises 1128 residues: MSRGAMQPSQQKLAEKLTILNDRGIGMLTRIYNIKKACGDPKAKPSYLIDKNLESAVKFIVRKFPAVETRNNNQQLAQLQKEKSEILKNLALYYFTFVDVMEFKDHVCELLNTIDACQVFFDITVNFDLTKNYLDLVVTYTTLMLLLSRIEERKAIIGLYNYAHEMTHGSSDREYPRLGQMIVDYENPLKKMMEEFVPHGKSLSDALVSLQMVYPRRNLSADQWRNAQLLSLISAPSTMLNPAQSDTMPCEYLSLDTMEKWIVFGFILCHAALNSDPAALSLWKLALQSSTCLCLFRDEVFHIHKAAEDLFVNIRGYNKRVNDIRECKESALSHAGSMHRERRKFLRSALKELATVLADQPGLLGPKALFVFMALSFARDEIIWLLRHADNIQKKSTDDFIDKHIAELIFYMEELRAHVRKYGPVMQRYYVQYLSGFDAVVLNELVQNLSVCPEDESIIMSSFVNTMTSLSVKQVEDGEVFDFRGMRLDWFRLQAYTSVSKASLGLADHRELGKMMNTIIFHTKMVDSLVEMLVETSDLSIFCFYSRAFEKMFQQCLELPSQSRYSISFPLLCTHFMSCTHELCPEERHHIGDRSLSLCNMFLDEMAKQARNLITDICTEQCTLSDQLLPKHCAKTISQAVNKKSKKQTGKKGEPEREKPGVESMRKNRLLVTNLDKLHTALSELCFSINYVPNMMVWEHTFTPREYLTSHLEIRFTKSIVGMTMYNQTTQEIAKPSELLTSVRAYMTVLQSIENYVQIDITRVFNNVLLQQTQHLDSHGEPTITSLYTNWYLETLLRQVSNGHIAYFPAMKAFVNLPTENELTFNAEEYSDISEMRSLSELLGPYGMKFLSESLMWHISSQVAELKKLVVDNVEVLTQMRTSFDKPDHMAALFKRLTSVDSVLKRMTIIGVILSFRSLAQEALRDVLSCHIPFLVSSVEDFKDHIPRETDMKVAMNVYELSSAAGLPCEIDPALVVALSSQKSENISPEEEYKIACLLMVFVAVSMPTLASNVMSQYSPAIEGHCNNIHCLAKAINQIAAALFTIHKGSIEDRLKEFLALASSSLLKIGQETDKTTTRNRESVYLLLDMIVQESPFLTMDLLESCFPYVLLRNAYHAVYKQSVSSSA.

The segment at 640 to 665 (AVNKKSKKQTGKKGEPEREKPGVESM) is disordered. The span at 651 to 665 (KKGEPEREKPGVESM) shows a compositional bias: basic and acidic residues. The chain crosses the membrane as a helical span at residues 995–1015 (IACLLMVFVAVSMPTLASNVM).

Belongs to the HEM-1/HEM-2 family.

The protein resides in the cell membrane. The protein localises to the cell projection. It is found in the lamellipodium membrane. Functionally, part of the WAVE complex that regulates lamellipodia formation. The WAVE complex regulates actin filament reorganization via its interaction with the Arp2/3 complex. Actin remodeling activity is regulated by RAC1. Plays a role in neural tube closure. In Danio rerio (Zebrafish), this protein is Nck-associated protein 1 (nckap1).